A 364-amino-acid polypeptide reads, in one-letter code: Poly(3-hydroxyalkanoate) polymerase subunit PhaE (364 aa).

Residues 322 to 364 (SGKTPTTALKAPAPATKATEKPATRATTRRKTAAKPTGGTADD) are disordered. Residues 324-338 (KTPTTALKAPAPATK) are compositionally biased toward low complexity.

This sequence belongs to the PHA/PHB synthase family. Type III PhaE subfamily. Forms a heterodimer with PhaC, which may multimerize in the presence of 3-hydroxybutyryl-CoA.

The protein localises to the cytoplasm. The protein operates within biopolymer metabolism; poly-(R)-3-hydroxybutanoate biosynthesis. In terms of biological role, polymerizes D(-)-3-hydroxybutyryl-CoA to create polyhydroxybutyrate (PHB) which consists of thousands of hydroxybutyrate molecules linked end to end. This subunit has no catalytic activity but enhances the activity of PhaC, the catalytic subunit. The sequence is that of Poly(3-hydroxyalkanoate) polymerase subunit PhaE from Thiocystis violacea.